The sequence spans 191 residues: dTTP/UTP pyrophosphatase (191 aa).

D69 acts as the Proton acceptor in catalysis.

Belongs to the Maf family. YhdE subfamily. Requires a divalent metal cation as cofactor.

The protein resides in the cytoplasm. The enzyme catalyses dTTP + H2O = dTMP + diphosphate + H(+). It catalyses the reaction UTP + H2O = UMP + diphosphate + H(+). Its function is as follows. Nucleoside triphosphate pyrophosphatase that hydrolyzes dTTP and UTP. May have a dual role in cell division arrest and in preventing the incorporation of modified nucleotides into cellular nucleic acids. This is dTTP/UTP pyrophosphatase from Pelotomaculum thermopropionicum (strain DSM 13744 / JCM 10971 / SI).